We begin with the raw amino-acid sequence, 452 residues long: Cholesterol 7-desaturase nvd 2 (452 aa).

2 consecutive transmembrane segments (helical) span residues 6–26 (LIRI…MGLC) and 32–52 (FPVM…ALVM). One can recognise a Rieske domain in the interval 107 to 212 (WFKVADSTWI…CCEVDGMAYL (106 aa)). 4 residues coordinate [2Fe-2S] cluster: cysteine 148, histidine 150, cysteine 169, and histidine 172.

It belongs to the cholesterol 7-desaturase family. The cofactor is [2Fe-2S] cluster.

It is found in the membrane. The enzyme catalyses cholesterol + NADPH + O2 + H(+) = 7-dehydrocholesterol + NADP(+) + 2 H2O. It carries out the reaction cholesterol + NADH + O2 + H(+) = 7-dehydrocholesterol + NAD(+) + 2 H2O. It functions in the pathway steroid hormone biosynthesis; dafachronic acid biosynthesis. In terms of biological role, catalyzes the production of 7-dehydrocholesterol (7-DHC or cholesta-5,7-dien-3beta-ol) by inserting a double bond (desaturating) at the C7-C8 single bond of cholesterol. Essential regulator of steroid biosynthesis as this reaction is the first step in the synthesis of the steroid hormone Delta(7)-dafachronic acid. The sequence is that of Cholesterol 7-desaturase nvd 2 from Ciona intestinalis (Transparent sea squirt).